A 632-amino-acid polypeptide reads, in one-letter code: Cytosolic Fe-S cluster assembly factor NAR1 (632 aa).

[4Fe-4S] cluster is bound at residue Cys20. The tract at residues 27–53 (LPAKPEDSSNPYEVTTEDKAAASQPPP) is disordered. Residues Cys62, Cys65, and Cys68 each contribute to the [4Fe-4S] cluster site. Disordered stretches follow at residues 99–119 (WQTQNGTNGTNGTNGTTNGHS) and 210–231 (LSPETSNPSTKPGSEGAIDTTP). Over residues 101 to 119 (TQNGTNGTNGTNGTTNGHS) the composition is skewed to low complexity. A compositionally biased stretch (polar residues) spans 211 to 221 (SPETSNPSTKP). Residues Cys240, Cys295, Cys486, and Cys490 each coordinate [4Fe-4S] cluster. Residues 542–573 (GSDSEEEKVDQDGDQNMQDATTNGHTSEPDIV) are disordered. Residues 544–554 (DSEEEKVDQDG) are compositionally biased toward acidic residues. A compositionally biased stretch (polar residues) spans 555 to 567 (DQNMQDATTNGHT).

Belongs to the NARF family.

Functionally, component of the cytosolic Fe/S protein assembly machinery. Required for maturation of extramitochondrial Fe/S proteins. May play a role in the transfer of pre-assembled Fe/S clusters to target apoproteins. The protein is Cytosolic Fe-S cluster assembly factor NAR1 (NAR1) of Phaeosphaeria nodorum (strain SN15 / ATCC MYA-4574 / FGSC 10173) (Glume blotch fungus).